The primary structure comprises 263 residues: Hydroxyethylthiazole kinase (263 aa).

Residue Met41 participates in substrate binding. ATP is bound by residues Lys117 and Ser163. Gly190 lines the substrate pocket.

The protein belongs to the Thz kinase family. Mg(2+) serves as cofactor.

It catalyses the reaction 5-(2-hydroxyethyl)-4-methylthiazole + ATP = 4-methyl-5-(2-phosphooxyethyl)-thiazole + ADP + H(+). It functions in the pathway cofactor biosynthesis; thiamine diphosphate biosynthesis; 4-methyl-5-(2-phosphoethyl)-thiazole from 5-(2-hydroxyethyl)-4-methylthiazole: step 1/1. Catalyzes the phosphorylation of the hydroxyl group of 4-methyl-5-beta-hydroxyethylthiazole (THZ). The chain is Hydroxyethylthiazole kinase from Thermoanaerobacter sp. (strain X514).